Here is a 142-residue protein sequence, read N- to C-terminus: FAD synthase (142 aa).

Residues 9–10 (TF), 14–17 (HPGH), and D92 contribute to the ATP site.

It belongs to the archaeal FAD synthase family. Homodimer. A divalent metal cation serves as cofactor.

It catalyses the reaction FMN + ATP + H(+) = FAD + diphosphate. It participates in cofactor biosynthesis; FAD biosynthesis; FAD from FMN: step 1/1. Its function is as follows. Catalyzes the transfer of the AMP portion of ATP to flavin mononucleotide (FMN) to produce flavin adenine dinucleotide (FAD) coenzyme. The protein is FAD synthase of Halalkalicoccus jeotgali (strain DSM 18796 / CECT 7217 / JCM 14584 / KCTC 4019 / B3).